A 183-amino-acid polypeptide reads, in one-letter code: Endoribonuclease YbeY (183 aa).

Zn(2+) contacts are provided by histidine 140, histidine 144, and histidine 150.

Belongs to the endoribonuclease YbeY family. Zn(2+) serves as cofactor.

The protein localises to the cytoplasm. Single strand-specific metallo-endoribonuclease involved in late-stage 70S ribosome quality control and in maturation of the 3' terminus of the 16S rRNA. This is Endoribonuclease YbeY from Bradyrhizobium diazoefficiens (strain JCM 10833 / BCRC 13528 / IAM 13628 / NBRC 14792 / USDA 110).